Here is a 154-residue protein sequence, read N- to C-terminus: uncharacterized protein (154 aa).

An N-terminal signal peptide occupies residues 1–33 (MTKRGIQAFAGGIILATAVLAAVFYLTDEDQAA).

This is an uncharacterized protein from Bacillus subtilis (strain 168).